The chain runs to 316 residues: Putative S-adenosyl-L-methionine-dependent methyltransferase MAB_4606c (316 aa).

S-adenosyl-L-methionine is bound by residues Asp137 and 166–167 (DL).

The protein belongs to the UPF0677 family.

Exhibits S-adenosyl-L-methionine-dependent methyltransferase activity. The sequence is that of Putative S-adenosyl-L-methionine-dependent methyltransferase MAB_4606c from Mycobacteroides abscessus (strain ATCC 19977 / DSM 44196 / CCUG 20993 / CIP 104536 / JCM 13569 / NCTC 13031 / TMC 1543 / L948) (Mycobacterium abscessus).